Consider the following 158-residue polypeptide: Large ribosomal subunit protein uL11 (158 aa).

Residues 1–21 are disordered; it reads MAQSVKTMVEGGKATTGPPIG.

It belongs to the universal ribosomal protein uL11 family. In terms of assembly, part of the ribosomal stalk of the 50S ribosomal subunit. Interacts with L10 and the large rRNA to form the base of the stalk. L10 forms an elongated spine to which L12 dimers bind in a sequential fashion forming a multimeric L10(L12)X complex.

In terms of biological role, forms part of the ribosomal stalk which helps the ribosome interact with GTP-bound translation factors. The sequence is that of Large ribosomal subunit protein uL11 from Thermoplasma volcanium (strain ATCC 51530 / DSM 4299 / JCM 9571 / NBRC 15438 / GSS1).